The chain runs to 451 residues: UPF0210 protein CLH_1879 (451 aa).

This sequence belongs to the UPF0210 family. As to quaternary structure, homodimer.

In Clostridium botulinum (strain Alaska E43 / Type E3), this protein is UPF0210 protein CLH_1879.